Here is a 294-residue protein sequence, read N- to C-terminus: Acetylglutamate kinase (294 aa).

Substrate contacts are provided by residues 63-64, arginine 85, and asparagine 188; that span reads GG.

It belongs to the acetylglutamate kinase family. ArgB subfamily.

The protein resides in the cytoplasm. The catalysed reaction is N-acetyl-L-glutamate + ATP = N-acetyl-L-glutamyl 5-phosphate + ADP. Its pathway is amino-acid biosynthesis; L-arginine biosynthesis; N(2)-acetyl-L-ornithine from L-glutamate: step 2/4. Catalyzes the ATP-dependent phosphorylation of N-acetyl-L-glutamate. The chain is Acetylglutamate kinase from Methanococcus maripaludis (strain C5 / ATCC BAA-1333).